Reading from the N-terminus, the 190-residue chain is Putative triphosphatase YjbK (190 aa).

Positions E4–S189 constitute a CYTH domain.

The polypeptide is Putative triphosphatase YjbK (yjbK) (Bacillus subtilis (strain 168)).